We begin with the raw amino-acid sequence, 273 residues long: Bis(5'-nucleosyl)-tetraphosphatase, symmetrical (273 aa).

The protein belongs to the Ap4A hydrolase family.

The catalysed reaction is P(1),P(4)-bis(5'-adenosyl) tetraphosphate + H2O = 2 ADP + 2 H(+). In terms of biological role, hydrolyzes diadenosine 5',5'''-P1,P4-tetraphosphate to yield ADP. In Aeromonas hydrophila subsp. hydrophila (strain ATCC 7966 / DSM 30187 / BCRC 13018 / CCUG 14551 / JCM 1027 / KCTC 2358 / NCIMB 9240 / NCTC 8049), this protein is Bis(5'-nucleosyl)-tetraphosphatase, symmetrical.